The chain runs to 392 residues: Enoyl-[acyl-carrier-protein] reductase [NADH] (392 aa).

NAD(+) contacts are provided by residues 48-53 (GCSTGY), 74-75 (FE), 111-112 (DA), and 139-140 (LA). Tyrosine 225 contacts substrate. Tyrosine 235 functions as the Proton donor in the catalytic mechanism. Residues lysine 244 and 273-275 (LVT) contribute to the NAD(+) site.

The protein belongs to the TER reductase family. In terms of assembly, monomer.

It carries out the reaction a 2,3-saturated acyl-[ACP] + NAD(+) = a (2E)-enoyl-[ACP] + NADH + H(+). It functions in the pathway lipid metabolism; fatty acid biosynthesis. In terms of biological role, involved in the final reduction of the elongation cycle of fatty acid synthesis (FAS II). Catalyzes the reduction of a carbon-carbon double bond in an enoyl moiety that is covalently linked to an acyl carrier protein (ACP). This is Enoyl-[acyl-carrier-protein] reductase [NADH] from Idiomarina loihiensis (strain ATCC BAA-735 / DSM 15497 / L2-TR).